A 229-amino-acid polypeptide reads, in one-letter code: Large ribosomal subunit protein uL1c (229 aa).

Belongs to the universal ribosomal protein uL1 family. In terms of assembly, part of the 50S ribosomal subunit.

The protein localises to the plastid. Its subcellular location is the chloroplast. In terms of biological role, binds directly to 23S rRNA. Might be involved in E site tRNA release (Potential). This Porphyra purpurea (Red seaweed) protein is Large ribosomal subunit protein uL1c (rpl1).